The chain runs to 451 residues: Signal transduction histidine-protein kinase ArlS (451 aa).

2 helical membrane-spanning segments follow: residues 11-31 (IIVT…IIIF) and 156-176 (IIAL…SYVF). In terms of domain architecture, HAMP spans 178-231 (TQITKPLVSLSNKMIEIRRDGFQNKLQLNTNYEEIDNLANTFNEMMSQIEESFN). The 213-residue stretch at 239-451 (DASHELRTPL…NKGTTFKIIF (213 aa)) folds into the Histidine kinase domain. The residue at position 242 (His242) is a Phosphohistidine; by autocatalysis.

Post-translationally, autophosphorylated.

It is found in the cell membrane. It carries out the reaction ATP + protein L-histidine = ADP + protein N-phospho-L-histidine.. Its function is as follows. Member of the two-component regulatory system ArlS/ArlR involved in the regulation of adhesion, autolysis, multidrug resistance and virulence. ArlS probably functions as a sensor protein kinase which is autophosphorylated at a histidine residue and transfers its phosphate group to ArlR. The chain is Signal transduction histidine-protein kinase ArlS (arlS) from Staphylococcus aureus (strain MRSA252).